The chain runs to 125 residues: Large ribosomal subunit protein bL12 (125 aa).

It belongs to the bacterial ribosomal protein bL12 family. In terms of assembly, homodimer. Part of the ribosomal stalk of the 50S ribosomal subunit. Forms a multimeric L10(L12)X complex, where L10 forms an elongated spine to which 2 to 4 L12 dimers bind in a sequential fashion. Binds GTP-bound translation factors.

In terms of biological role, forms part of the ribosomal stalk which helps the ribosome interact with GTP-bound translation factors. Is thus essential for accurate translation. The polypeptide is Large ribosomal subunit protein bL12 (Campylobacter curvus (strain 525.92)).